A 289-amino-acid polypeptide reads, in one-letter code: Type II methyltransferase M.MjaIII (289 aa).

Residues W9, K13, D63, and D199 each coordinate S-adenosyl-L-methionine.

Belongs to the N(4)/N(6)-methyltransferase family.

The catalysed reaction is a 2'-deoxyadenosine in DNA + S-adenosyl-L-methionine = an N(6)-methyl-2'-deoxyadenosine in DNA + S-adenosyl-L-homocysteine + H(+). In terms of biological role, an alpha subtype methylase that recognizes the double-stranded sequence 5'-GATC-3', methylates A-2 on both strands, and protects the DNA from cleavage by the MjaIII endonuclease. This is Type II methyltransferase M.MjaIII (mjaIIIM) from Methanocaldococcus jannaschii (strain ATCC 43067 / DSM 2661 / JAL-1 / JCM 10045 / NBRC 100440) (Methanococcus jannaschii).